The sequence spans 484 residues: Catalase (484 aa).

At Met53 the chain carries Methionine sulfone. Residues His54 and Asn127 contribute to the active site. A heme-binding site is contributed by Tyr337.

In terms of assembly, homotetramer. Heme is required as a cofactor. Requires NADP(+) as cofactor.

The protein localises to the cytoplasm. It carries out the reaction 2 H2O2 = O2 + 2 H2O. Decomposes hydrogen peroxide into water and oxygen; serves to protect cells from the toxic effects of hydrogen peroxide. The chain is Catalase (katA) from Proteus mirabilis.